Here is a 255-residue protein sequence, read N- to C-terminus: MLLTIDIGNTNIKIGVYQDERLTAHWRVTTERHRLADEYLVLLHNLFDLGGIDPREIDGCAISCVVPPLTGEFRTLCRTYFRVEPLMVNATTPTGLRYNVDTPAELGADRIANSLAAFRRYGGPVIVLAFGTATTFDVITADGEYIGGAIAPGIGISADALFRLAAKLYQVELVRPPSVIGKNTIHHMQSGVILGYAGLVEGLVNRMQAELGTSCPVVATGGLAELIAAETEAITTVEPYLTLEGLRLIYEMNRS.

6–13 (DIGNTNIK) lines the ATP pocket. Substrate is bound at residue 107–110 (GADR). Catalysis depends on aspartate 109, which acts as the Proton acceptor. Threonine 132 contacts ATP. Threonine 184 contributes to the substrate binding site.

This sequence belongs to the type III pantothenate kinase family. As to quaternary structure, homodimer. The cofactor is NH4(+). It depends on K(+) as a cofactor.

The protein localises to the cytoplasm. The enzyme catalyses (R)-pantothenate + ATP = (R)-4'-phosphopantothenate + ADP + H(+). It participates in cofactor biosynthesis; coenzyme A biosynthesis; CoA from (R)-pantothenate: step 1/5. Catalyzes the phosphorylation of pantothenate (Pan), the first step in CoA biosynthesis. The protein is Type III pantothenate kinase of Roseiflexus sp. (strain RS-1).